Here is a 213-residue protein sequence, read N- to C-terminus: Redox-sensing transcriptional repressor Rex (213 aa).

The H-T-H motif DNA-binding region spans 18 to 57; sequence LYYRFVNTLKSKGIDRVNSKAISEGLNIDSATIRRDFSYF. NAD(+) is bound at residue 92 to 97; that stretch reads GVGNLG.

This sequence belongs to the transcriptional regulatory Rex family. As to quaternary structure, homodimer.

The protein resides in the cytoplasm. In terms of biological role, modulates transcription in response to changes in cellular NADH/NAD(+) redox state. In Staphylococcus saprophyticus subsp. saprophyticus (strain ATCC 15305 / DSM 20229 / NCIMB 8711 / NCTC 7292 / S-41), this protein is Redox-sensing transcriptional repressor Rex.